The following is a 100-amino-acid chain: Urease subunit gamma (100 aa).

This sequence belongs to the urease gamma subunit family. Heterotrimer of UreA (gamma), UreB (beta) and UreC (alpha) subunits. Three heterotrimers associate to form the active enzyme.

It localises to the cytoplasm. The catalysed reaction is urea + 2 H2O + H(+) = hydrogencarbonate + 2 NH4(+). It functions in the pathway nitrogen metabolism; urea degradation; CO(2) and NH(3) from urea (urease route): step 1/1. The chain is Urease subunit gamma from Yersinia rohdei.